The chain runs to 490 residues: MNKVRVRFAPSPTGSLHIGGARTALFNWLFARHHNGTFVLRIDDTDTERSTEASYKEILAAMGWLGLDWDEGPEKGGQFGPYLQSQRLELYRREAARLLNEGKAYLCYCTVEELAERRRQAQAEGRPPMYDRRCRYLTPADRTRLEQEGRQPVIRLAVPETGTTVVKDLIRGDVAFENATIDDFIIFKSNGMPTYNFATVIDDHLMQISHIIRAEEHLSNTPKQILVYQALAYELPAFAHVPMILAPDRSKLSKRHGATSVEEYRDEGYLPEAIINYLALLGWSPEGEEEIIPLEKIIEQFSLERVSKNAAIYDTKKLTWINGHYLREGNLDRITRLALPFLQAKGLLPDPLPEKDYNYVRSVIAAVRDRVKTLAEVADAASYFFTDVTNYEEKGIRKHFTRPGAAALLDEARERLATLPEFNAQAAEEAYRSLAEGKGISTGQLFHPTRLAISGRTMGPGLFEIMELLGRETVLARLDRAARWIRENLA.

Positions 10–20 (PSPTGSLHIGG) match the 'HIGH' region motif. Positions 251-255 (KLSKR) match the 'KMSKS' region motif. Lys254 is a binding site for ATP.

This sequence belongs to the class-I aminoacyl-tRNA synthetase family. Glutamate--tRNA ligase type 1 subfamily. As to quaternary structure, monomer.

It is found in the cytoplasm. It catalyses the reaction tRNA(Glu) + L-glutamate + ATP = L-glutamyl-tRNA(Glu) + AMP + diphosphate. In terms of biological role, catalyzes the attachment of glutamate to tRNA(Glu) in a two-step reaction: glutamate is first activated by ATP to form Glu-AMP and then transferred to the acceptor end of tRNA(Glu). In Moorella thermoacetica (strain ATCC 39073 / JCM 9320), this protein is Glutamate--tRNA ligase.